A 246-amino-acid polypeptide reads, in one-letter code: uncharacterized protein (246 aa).

4 helical membrane passes run 32–52 (TLFFVRALIVTGFYLSIVGFI), 69–89 (IIAIVLAFIAGRVFCGWMCPF), 121–141 (IYFKYVVLILVVLAYLSGVKI), and 146–166 (LAYLLLALFLVLGFIYPMFFC). 4Fe-4S ferredoxin-type domains follow at residues 185-213 (FKLKLDENKCVGCRLCERKCPMQIKITEK) and 210-239 (ITEKIDQMECIRCFECMSVCKKGALSFSAF). 8 residues coordinate [4Fe-4S] cluster: cysteine 194, cysteine 197, cysteine 200, cysteine 204, cysteine 219, cysteine 222, cysteine 225, and cysteine 229.

It is found in the cell membrane. This is an uncharacterized protein from Methanocaldococcus jannaschii (strain ATCC 43067 / DSM 2661 / JAL-1 / JCM 10045 / NBRC 100440) (Methanococcus jannaschii).